We begin with the raw amino-acid sequence, 321 residues long: GDP-L-fucose synthase (321 aa).

14 to 20 (GGSGLVG) serves as a coordination point for NADP(+). Y143 acts as the Proton donor/acceptor in catalysis. Residues K147, 170–173 (PTNV), and H186 each bind NADP(+). Residues K194, W208, R215, and D277 each contribute to the substrate site.

The protein belongs to the NAD(P)-dependent epimerase/dehydratase family. Fucose synthase subfamily. As to quaternary structure, homodimer.

The catalysed reaction is GDP-beta-L-fucose + NADP(+) = GDP-4-dehydro-alpha-D-rhamnose + NADPH + H(+). It functions in the pathway nucleotide-sugar biosynthesis; GDP-L-fucose biosynthesis via de novo pathway; GDP-L-fucose from GDP-alpha-D-mannose: step 2/2. Functionally, catalyzes the two-step NADP-dependent conversion of GDP-4-dehydro-6-deoxy-D-mannose to GDP-fucose, involving an epimerase and a reductase reaction. The protein is GDP-L-fucose synthase of Homo sapiens (Human).